A 305-amino-acid polypeptide reads, in one-letter code: Thymidylate synthase (305 aa).

DUMP contacts are provided by residues Arg26 and 160–161 (RR). The active-site Nucleophile is the Cys180. DUMP-binding positions include 207–210 (RSCD), Asn218, and 248–250 (HLY). Asp210 serves as a coordination point for (6R)-5,10-methylene-5,6,7,8-tetrahydrofolate. Ala304 contacts (6R)-5,10-methylene-5,6,7,8-tetrahydrofolate.

The protein belongs to the thymidylate synthase family. Bacterial-type ThyA subfamily. Homodimer.

It localises to the cytoplasm. It catalyses the reaction dUMP + (6R)-5,10-methylene-5,6,7,8-tetrahydrofolate = 7,8-dihydrofolate + dTMP. The protein operates within pyrimidine metabolism; dTTP biosynthesis. Catalyzes the reductive methylation of 2'-deoxyuridine-5'-monophosphate (dUMP) to 2'-deoxythymidine-5'-monophosphate (dTMP) while utilizing 5,10-methylenetetrahydrofolate (mTHF) as the methyl donor and reductant in the reaction, yielding dihydrofolate (DHF) as a by-product. This enzymatic reaction provides an intracellular de novo source of dTMP, an essential precursor for DNA biosynthesis. The protein is Thymidylate synthase of Sinorhizobium fredii (strain NBRC 101917 / NGR234).